We begin with the raw amino-acid sequence, 145 residues long: 3-dehydroquinate dehydratase (145 aa).

Y22 serves as the catalytic Proton acceptor. The substrate site is built by N71, H77, and D84. Catalysis depends on H97, which acts as the Proton donor. Substrate-binding positions include I98–S99 and R108.

This sequence belongs to the type-II 3-dehydroquinase family. As to quaternary structure, homododecamer.

The catalysed reaction is 3-dehydroquinate = 3-dehydroshikimate + H2O. The protein operates within metabolic intermediate biosynthesis; chorismate biosynthesis; chorismate from D-erythrose 4-phosphate and phosphoenolpyruvate: step 3/7. Catalyzes a trans-dehydration via an enolate intermediate. The chain is 3-dehydroquinate dehydratase from Exiguobacterium sp. (strain ATCC BAA-1283 / AT1b).